Consider the following 550-residue polypeptide: Parathyroid hormone 2 receptor (550 aa).

A signal peptide spans 1 to 24 (MAGLGASLHVWGWLMLGSCLLARA). Topologically, residues 27-145 (DSDGTITIEE…GKQEFFERLY (119 aa)) are extracellular. 4 N-linked (GlcNAc...) asparagine glycosylation sites follow: asparagine 51, asparagine 106, asparagine 116, and asparagine 121. The chain crosses the membrane as a helical span at residues 146-169 (VMYTVGYSISFGSLAVAILIIGYF). At 170 to 176 (RRLHCTR) the chain is on the cytoplasmic side. Residues 177-196 (NYIHMHLFVSFMLRATSIFV) form a helical membrane-spanning segment. At 197 to 237 (KDRVVHAHIGVKELESLIMQDDPQNSIEATSVDKSQYIGCK) the chain is on the extracellular side. A helical transmembrane segment spans residues 238–260 (IAVVMFIYFLATNYYWILVEGLY). At 261 to 275 (LHNLIFVAFFSDTKY) the chain is on the cytoplasmic side. Residues 276-297 (LWGFILIGWGFPAAFVAAWAVA) traverse the membrane as a helical segment. The Extracellular portion of the chain corresponds to 298–316 (RATLADARCWELSAGDIKW). A helical transmembrane segment spans residues 317–337 (IYQAPILAAIGLNFILFLNTV). At 338–364 (RVLATKIWETNAVGHDTRKQYRKLAKS) the chain is on the cytoplasmic side. The chain crosses the membrane as a helical span at residues 365 to 383 (TLVLVLVFGVHYIVFVCLP). The Extracellular portion of the chain corresponds to 384–394 (HSFTGLGWEIR). A helical membrane pass occupies residues 395-417 (MHCELFFNSFQGFFVSIIYCYCN). The Cytoplasmic segment spans residues 418-550 (GEVQAEVKKM…GCQGETEDVL (133 aa)). Over residues 511-531 (EETKEDSGRQGDDILMEKPSR) the composition is skewed to basic and acidic residues. The tract at residues 511 to 550 (EETKEDSGRQGDDILMEKPSRPMESNPDTEGCQGETEDVL) is disordered.

Belongs to the G-protein coupled receptor 2 family. As to quaternary structure, binds to TIPF39/TIP39. Expressed abundantly in brain and pancreas. Also expressed in the testis.

Its subcellular location is the cell membrane. This is a specific receptor for parathyroid hormone. The activity of this receptor is mediated by G proteins which activate adenylyl cyclase. PTH2R may be responsible for PTH effects in a number of physiological systems. It may play a significant role in pancreatic function. PTH2R presence in neurons indicates that it may function as a neurotransmitter receptor. The protein is Parathyroid hormone 2 receptor (PTH2R) of Homo sapiens (Human).